The following is a 246-amino-acid chain: 1-(5-phosphoribosyl)-5-[(5-phosphoribosylamino)methylideneamino] imidazole-4-carboxamide isomerase (246 aa).

D8 functions as the Proton acceptor in the catalytic mechanism. The active-site Proton donor is D131.

Belongs to the HisA/HisF family.

It localises to the cytoplasm. The catalysed reaction is 1-(5-phospho-beta-D-ribosyl)-5-[(5-phospho-beta-D-ribosylamino)methylideneamino]imidazole-4-carboxamide = 5-[(5-phospho-1-deoxy-D-ribulos-1-ylimino)methylamino]-1-(5-phospho-beta-D-ribosyl)imidazole-4-carboxamide. It functions in the pathway amino-acid biosynthesis; L-histidine biosynthesis; L-histidine from 5-phospho-alpha-D-ribose 1-diphosphate: step 4/9. The sequence is that of 1-(5-phosphoribosyl)-5-[(5-phosphoribosylamino)methylideneamino] imidazole-4-carboxamide isomerase from Albidiferax ferrireducens (strain ATCC BAA-621 / DSM 15236 / T118) (Rhodoferax ferrireducens).